A 400-amino-acid chain; its full sequence is Haptoglobin (400 aa).

Residues 1–18 (MSALPVVVTLLLCGQLLA) form the signal peptide. 2 Sushi domains span residues 28-83 (DSCP…ECED) and 84-141 (ASCP…ECEA). Cystine bridges form between Cys49–Cys81, Cys105–Cys139, and Cys143–Cys260. Residues 156–398 (IIGGSLDAKG…ILDWVRKTIA (243 aa)) enclose the Peptidase S1 domain. Residues Asn285, Asn309, and Asn315 are each glycosylated (N-linked (GlcNAc...) asparagine). Intrachain disulfides connect Cys303–Cys334 and Cys345–Cys375. The interval 312-317 (VPENKT) is interaction with CD163.

This sequence belongs to the peptidase S1 family. Tetramer of two alpha and two beta chains; disulfide-linked. The hemoglobin/haptoglobin complex is composed of a haptoglobin dimer bound to two hemoglobin alpha-beta dimers. Interacts with CD163. Interacts with ERGIC3. In terms of tissue distribution, expressed by the liver and secreted in plasma.

It is found in the secreted. It localises to the extracellular space. Functionally, as a result of hemolysis, hemoglobin is found to accumulate in the kidney and is secreted in the urine. Haptoglobin captures, and combines with free plasma hemoglobin to allow hepatic recycling of heme iron and to prevent kidney damage. Haptoglobin also acts as an antioxidant, has antibacterial activity and plays a role in modulating many aspects of the acute phase response. Hemoglobin/haptoglobin complexes are rapidly cleared by the macrophage CD163 scavenger receptor expressed on the surface of liver Kupfer cells through an endocytic lysosomal degradation pathway. The polypeptide is Haptoglobin (HP) (Cervus elaphus (Red deer)).